The sequence spans 664 residues: Trifunctional UDP-glucose 4,6-dehydratase/UDP-4-keto-6-deoxy-D-glucose 3,5-epimerase/UDP-4-keto-L-rhamnose-reductase RHM3 (664 aa).

13 to 19 (GAAGFIA) contributes to the NAD(+) binding site. T132 serves as a coordination point for substrate. D133 acts as the Proton donor in catalysis. Active-site proton acceptor residues include E134 and Y159. 386-392 (GKTGWLG) contacts NADP(+).

This sequence in the N-terminal section; belongs to the NAD(P)-dependent epimerase/dehydratase family. dTDP-glucose dehydratase subfamily. It in the C-terminal section; belongs to the dTDP-4-dehydrorhamnose reductase family. NAD(+) serves as cofactor. The cofactor is NADP(+). Expressed in roots, stems, seedlings, and siliques. Lower expression in inflorescence tips, and leaves.

It catalyses the reaction UDP-alpha-D-glucose = UDP-4-dehydro-6-deoxy-alpha-D-glucose + H2O. The protein operates within carbohydrate biosynthesis. Functionally, trifunctional enzyme involved in UDP-beta-L-rhamnose biosynthesis, a precursor of the primary cell wall components rhamnogalacturonan I (RG-I) and rhamnogalacturonan II (RG-II). Catalyzes the dehydration of UDP-glucose to form UDP-4-dehydro-6-deoxy-D-glucose followed by the epimerization of the C3' and C5' positions of UDP-4-dehydro-6-deoxy-D-glucose to form UDP-4-keto-beta-L-rhamnose and the reduction of UDP-4-keto-beta-L-rhamnose to yield UDP-beta-L-rhamnose. The sequence is that of Trifunctional UDP-glucose 4,6-dehydratase/UDP-4-keto-6-deoxy-D-glucose 3,5-epimerase/UDP-4-keto-L-rhamnose-reductase RHM3 from Arabidopsis thaliana (Mouse-ear cress).